Reading from the N-terminus, the 307-residue chain is 4-hydroxythreonine-4-phosphate dehydrogenase (307 aa).

The substrate site is built by His-126 and Thr-127. 3 residues coordinate a divalent metal cation: His-156, His-195, and His-251. Substrate-binding residues include Lys-259, Asn-268, and Arg-277.

It belongs to the PdxA family. Homodimer. Zn(2+) is required as a cofactor. Requires Mg(2+) as cofactor. It depends on Co(2+) as a cofactor.

It localises to the cytoplasm. It carries out the reaction 4-(phosphooxy)-L-threonine + NAD(+) = 3-amino-2-oxopropyl phosphate + CO2 + NADH. Its pathway is cofactor biosynthesis; pyridoxine 5'-phosphate biosynthesis; pyridoxine 5'-phosphate from D-erythrose 4-phosphate: step 4/5. Its function is as follows. Catalyzes the NAD(P)-dependent oxidation of 4-(phosphooxy)-L-threonine (HTP) into 2-amino-3-oxo-4-(phosphooxy)butyric acid which spontaneously decarboxylates to form 3-amino-2-oxopropyl phosphate (AHAP). This chain is 4-hydroxythreonine-4-phosphate dehydrogenase, found in Helicobacter pylori (strain Shi470).